The sequence spans 2910 residues: Highly reducing polyketide synthase calA (2910 aa).

One can recognise a Ketosynthase family 3 (KS3) domain in the interval 8–444 (NEPLAIVGSA…GTNAHAILES (437 aa)). Active-site for beta-ketoacyl synthase activity residues include C181, H320, and H364. The interval 559–875 (VFTGQGAQYA…PYYGVLSRGT (317 aa)) is acyl transferase (AT) domain. The N-terminal hotdog fold stretch occupies residues 948 to 1082 (NQLLGTMMPD…LHIVFGPSSE (135 aa)). The region spanning 948-1245 (NQLLGTMMPD…LKPLGALTAK (298 aa)) is the PKS/mFAS DH domain. Residues 949 to 1242 (QLLGTMMPDS…GVELKPLGAL (294 aa)) are dehydratase (DH) domain. H980 acts as the Proton acceptor; for dehydratase activity in catalysis. The tract at residues 1095 to 1245 (MISVDNERFY…LKPLGALTAK (151 aa)) is C-terminal hotdog fold. D1156 serves as the catalytic Proton donor; for dehydratase activity. The interval 1399–1586 (EAGLWIGKII…GIDSTAPQAF (188 aa)) is methyltransferase (MT) domain. A ketoreductase (KR)domain region spans residues 2125–2298 (TYWLCGLSGA…AATALNVGAI (174 aa)). Residues 2406–2488 (QSRSEVLAVV…ELAELAAEQA (83 aa)) form the Carrier domain. The residue at position 2448 (S2448) is an O-(pantetheine 4'-phosphoryl)serine. The segment at 2492 to 2565 (LLPGLGGEAP…TPDPHSTKGP (74 aa)) is disordered. Residues 2522–2534 (VPQSDETGSSSAD) are compositionally biased toward polar residues. A compositionally biased stretch (low complexity) spans 2550–2559 (GYTTPTTPDP). Positions 2597–2826 (LTGVSGLLGR…DFVYVKNAAD (230 aa)) are reductase (R) domain.

It functions in the pathway secondary metabolite biosynthesis. Highly reducing polyketide synthase; part of the gene cluster that mediates the biosynthesis of calbistrin A and related compounds. Calbistrin A is a secondary metabolite with an interesting structure that was recently found to have bioactivity against leukemia cells. It consists of two polyketides linked by an ester bond: a bicyclic decalin containing polyketide and a linear 12 carbon dioic acid structure. The polyketide synthase calA is probably responsible for forming the decalin moiety. Because calA lacks a designated enoylreductase (ER) domain, the required activity is provided by the trans-enoyl reductase calK. Following release from the PKS, calF then probably catalyzes the oxidation and the subsequent Diels Alder cycloisomerization that lead to the formation of the decalin moiety. The decalin polyketide backbone includes two C-methyl groups, at C7 and C11 in backbone, of which the C7 position is probably methylated by the methyltransferase domain of calA. A candidate for adding the methyl group at C11, if not done by CalA, is the cluster methyltransferase calH. Several additional tailoring enzymes within the cluster could be involved in the modification of the decalin polyketide product. Those include the 3 cytochrome P450 monooxygenases CalE, CalG and CalL, of which one might be responsible for the introduction of the extra hydroxyl group attached to the backbone of the decalin moiety, at position C9 in the backbone, that allows for attachment of the linear moiety. One tailoring enzyme activity that is expected to be involved in biosynthesis of calbistrin is an acyltransferase for connecting the two polyketide synthase products, and which could be performed by the cluster acyltransferase calJ. The enzyme responsible for the biosynthesis of the linear moiety, probably a second PKS, has not been identified yet. The chain is Highly reducing polyketide synthase calA from Penicillium decumbens.